A 352-amino-acid chain; its full sequence is Protein MGF 360-16R (352 aa).

The protein belongs to the asfivirus MGF 360 family.

Its function is as follows. Plays a role in virus cell tropism, and may be required for efficient virus replication in macrophages. This chain is Protein MGF 360-16R, found in African swine fever virus (isolate Warthog/Namibia/Wart80/1980) (ASFV).